The primary structure comprises 200 residues: Probable GTP-binding protein EngB (200 aa).

The region spanning Thr-22–Ala-194 is the EngB-type G domain. GTP is bound by residues Gly-30–Ser-37, Gly-57–Leu-61, Asp-75–Gly-78, Thr-142–Asp-145, and Phe-173–Ala-175. Mg(2+) is bound by residues Ser-37 and Thr-59.

Belongs to the TRAFAC class TrmE-Era-EngA-EngB-Septin-like GTPase superfamily. EngB GTPase family. The cofactor is Mg(2+).

Functionally, necessary for normal cell division and for the maintenance of normal septation. The polypeptide is Probable GTP-binding protein EngB (Pelobacter propionicus (strain DSM 2379 / NBRC 103807 / OttBd1)).